The following is a 159-amino-acid chain: Cyclic pyranopterin monophosphate synthase (159 aa).

Substrate-binding positions include 75 to 77 and 113 to 114; these read LCH and ME. The active site involves Asp128.

Belongs to the MoaC family. In terms of assembly, homohexamer; trimer of dimers.

It carries out the reaction (8S)-3',8-cyclo-7,8-dihydroguanosine 5'-triphosphate = cyclic pyranopterin phosphate + diphosphate. The protein operates within cofactor biosynthesis; molybdopterin biosynthesis. Functionally, catalyzes the conversion of (8S)-3',8-cyclo-7,8-dihydroguanosine 5'-triphosphate to cyclic pyranopterin monophosphate (cPMP). The sequence is that of Cyclic pyranopterin monophosphate synthase from Aliivibrio salmonicida (strain LFI1238) (Vibrio salmonicida (strain LFI1238)).